We begin with the raw amino-acid sequence, 383 residues long: 3-phytase (383 aa).

Residues 1–26 (MNHSKTLLLTAAAGLMLTCGAVSSQA) form the signal peptide. The propeptide occupies 27 to 30 (KHKL). In terms of domain architecture, BPP spans 31–362 (SDPYHFTVNA…VPWERIADKI (332 aa)). The tract at residues 364 to 383 (FHPQVNKQVDPRKMTDRSGK) is disordered. Basic and acidic residues predominate over residues 372-383 (VDPRKMTDRSGK).

Its subcellular location is the secreted. The catalysed reaction is 1D-myo-inositol hexakisphosphate + H2O = 1D-myo-inositol 1,2,4,5,6-pentakisphosphate + phosphate. The chain is 3-phytase (phy) from Bacillus sp. (strain DS11).